The chain runs to 306 residues: Ribonuclease Z (306 aa).

Positions 63, 65, 67, 68, 141, 211, and 269 each coordinate Zn(2+). Catalysis depends on aspartate 67, which acts as the Proton acceptor.

Belongs to the RNase Z family. In terms of assembly, homodimer. It depends on Zn(2+) as a cofactor.

It carries out the reaction Endonucleolytic cleavage of RNA, removing extra 3' nucleotides from tRNA precursor, generating 3' termini of tRNAs. A 3'-hydroxy group is left at the tRNA terminus and a 5'-phosphoryl group is left at the trailer molecule.. In terms of biological role, zinc phosphodiesterase, which displays some tRNA 3'-processing endonuclease activity. Probably involved in tRNA maturation, by removing a 3'-trailer from precursor tRNA. The sequence is that of Ribonuclease Z from Staphylococcus aureus (strain bovine RF122 / ET3-1).